We begin with the raw amino-acid sequence, 1193 residues long: DNA polymerase (1193 aa).

Residues 1 to 88 (MALVQTHGSR…PAKKKRGTVV (88 aa)) form a disordered region. The segment covering 48-68 (PATTASGSRAAPTARRASSPP) has biased composition (low complexity).

Belongs to the DNA polymerase type-B family. In terms of assembly, heterodimer with the terminal protein; this heterodimer binds to bp 9 to 18 of the genome. Forms a complex with viral pTP, DBP and hosts NFIA and POU2F1/OCT1 for initiation of replication.

It localises to the host nucleus. It catalyses the reaction DNA(n) + a 2'-deoxyribonucleoside 5'-triphosphate = DNA(n+1) + diphosphate. Its function is as follows. Eukaryotic-type DNA polymerase involved in viral genomic replication. DNA synthesis is protein primed, and acts in a strand displacement replication. Assembles in complex with viral pTP, DBP, host NFIA and host POU2F1/OCT1 on viral origin of replication. The polymerase covalently transfers dCMP onto pTP, thereby initiating complementary strand synthesis. The chain is DNA polymerase from Homo sapiens (Human).